The chain runs to 232 residues: Large ribosomal subunit protein uL1 (232 aa).

It belongs to the universal ribosomal protein uL1 family. Part of the 50S ribosomal subunit.

Binds directly to 23S rRNA. The L1 stalk is quite mobile in the ribosome, and is involved in E site tRNA release. In terms of biological role, protein L1 is also a translational repressor protein, it controls the translation of the L11 operon by binding to its mRNA. The sequence is that of Large ribosomal subunit protein uL1 from Cereibacter sphaeroides (strain ATCC 17029 / ATH 2.4.9) (Rhodobacter sphaeroides).